We begin with the raw amino-acid sequence, 192 residues long: Elongation factor P (192 aa).

It belongs to the elongation factor P family.

The protein localises to the cytoplasm. It functions in the pathway protein biosynthesis; polypeptide chain elongation. Its function is as follows. Involved in peptide bond synthesis. Stimulates efficient translation and peptide-bond synthesis on native or reconstituted 70S ribosomes in vitro. Probably functions indirectly by altering the affinity of the ribosome for aminoacyl-tRNA, thus increasing their reactivity as acceptors for peptidyl transferase. The sequence is that of Elongation factor P from Borrelia recurrentis (strain A1).